Here is a 485-residue protein sequence, read N- to C-terminus: Phenylalanine--tRNA ligase alpha subunit, cytoplasmic (485 aa).

L-phenylalanine-binding positions include Thr-318, 360–362, and Tyr-400; that span reads QIE. Residue Glu-402 coordinates Mg(2+). L-phenylalanine is bound at residue Phe-426.

This sequence belongs to the class-II aminoacyl-tRNA synthetase family. Phe-tRNA synthetase alpha subunit type 2 subfamily. Tetramer of two alpha and two beta subunits. Mg(2+) serves as cofactor.

The protein localises to the cytoplasm. Its subcellular location is the cytosol. The enzyme catalyses tRNA(Phe) + L-phenylalanine + ATP = L-phenylalanyl-tRNA(Phe) + AMP + diphosphate + H(+). In Arabidopsis thaliana (Mouse-ear cress), this protein is Phenylalanine--tRNA ligase alpha subunit, cytoplasmic.